The sequence spans 273 residues: Large ribosomal subunit protein uL2 (273 aa).

Residues 228–273 form a disordered region; that stretch reads VDHPHGGGEGKTSGGRHPVTPWGFPTKGKKTRKNKRTSKFIVKKRK. Over residues 254-273 the composition is skewed to basic residues; that stretch reads KGKKTRKNKRTSKFIVKKRK.

The protein belongs to the universal ribosomal protein uL2 family. Part of the 50S ribosomal subunit. Forms a bridge to the 30S subunit in the 70S ribosome.

Its function is as follows. One of the primary rRNA binding proteins. Required for association of the 30S and 50S subunits to form the 70S ribosome, for tRNA binding and peptide bond formation. It has been suggested to have peptidyltransferase activity; this is somewhat controversial. Makes several contacts with the 16S rRNA in the 70S ribosome. The protein is Large ribosomal subunit protein uL2 of Rickettsia akari (strain Hartford).